The sequence spans 279 residues: Gas vesicle protein L2 (279 aa).

The protein belongs to the gas vesicle GvpF/GvpL family. In terms of assembly, gvpF to GvpM interact with each other in vitro, and may form multi-subunit complex(es). Interacts with GvpC, GvpN and GvpO.

It localises to the gas vesicle. In terms of biological role, proteins GvpF to GvpM might be involved in nucleating gas vesicle formation. A minor component of the gas vesicle. Gas vesicles are hollow, gas filled proteinaceous nanostructures found in several microbial planktonic microorganisms. They allow positioning of halobacteria at the optimal depth for growth in the poorly aerated, shallow brine pools of their habitat. Functionally, expression of 2 c-vac DNA fragments containing 2 divergently transcribed regions (gvpE-gvpF-gvpG-gvpH-gvpI-gvpJ-gvpK-gvpL-gvpM and gvpA-gvpC-gvpN-gvpO) allows H.volcanii to produce gas vesicles. This is Gas vesicle protein L2 from Halobacterium salinarum (strain ATCC 700922 / JCM 11081 / NRC-1) (Halobacterium halobium).